Consider the following 81-residue polypeptide: Photosystem I iron-sulfur center (81 aa).

4Fe-4S ferredoxin-type domains are found at residues Ser-2–Trp-31 and Ile-39–Tyr-68. Residues Cys-11, Cys-14, Cys-17, Cys-21, Cys-48, Cys-51, Cys-54, and Cys-58 each contribute to the [4Fe-4S] cluster site.

The eukaryotic PSI reaction center is composed of at least 11 subunits. [4Fe-4S] cluster serves as cofactor.

It is found in the plastid. The protein localises to the chloroplast thylakoid membrane. The enzyme catalyses reduced [plastocyanin] + hnu + oxidized [2Fe-2S]-[ferredoxin] = oxidized [plastocyanin] + reduced [2Fe-2S]-[ferredoxin]. Functionally, apoprotein for the two 4Fe-4S centers FA and FB of photosystem I (PSI); essential for photochemical activity. FB is the terminal electron acceptor of PSI, donating electrons to ferredoxin. The C-terminus interacts with PsaA/B/D and helps assemble the protein into the PSI complex. Required for binding of PsaD and PsaE to PSI. PSI is a plastocyanin-ferredoxin oxidoreductase, converting photonic excitation into a charge separation, which transfers an electron from the donor P700 chlorophyll pair to the spectroscopically characterized acceptors A0, A1, FX, FA and FB in turn. This is Photosystem I iron-sulfur center from Acorus calamus (Sweet flag).